Here is a 250-residue protein sequence, read N- to C-terminus: uncharacterized protein (250 aa).

Disordered regions lie at residues 85–107 (NQFP…QSEP) and 158–198 (EPVP…AKVP). Residues 167–176 (PAVEQPQVKQ) are compositionally biased toward low complexity.

This is an uncharacterized protein from Mycoplasma pneumoniae (strain ATCC 29342 / M129 / Subtype 1) (Mycoplasmoides pneumoniae).